The sequence spans 264 residues: NAD kinase (264 aa).

The Proton acceptor role is filled by aspartate 45. NAD(+) is bound by residues 45 to 46, histidine 50, 121 to 122, arginine 147, aspartate 149, alanine 184, and glutamine 224; these read DG and NE.

Belongs to the NAD kinase family. It depends on a divalent metal cation as a cofactor.

Its subcellular location is the cytoplasm. The enzyme catalyses NAD(+) + ATP = ADP + NADP(+) + H(+). Its function is as follows. Involved in the regulation of the intracellular balance of NAD and NADP, and is a key enzyme in the biosynthesis of NADP. Catalyzes specifically the phosphorylation on 2'-hydroxyl of the adenosine moiety of NAD to yield NADP. The chain is NAD kinase from Lysinibacillus sphaericus (strain C3-41).